A 95-amino-acid polypeptide reads, in one-letter code: Aspartyl/glutamyl-tRNA(Asn/Gln) amidotransferase subunit C (95 aa).

This sequence belongs to the GatC family. As to quaternary structure, heterotrimer of A, B and C subunits.

It catalyses the reaction L-glutamyl-tRNA(Gln) + L-glutamine + ATP + H2O = L-glutaminyl-tRNA(Gln) + L-glutamate + ADP + phosphate + H(+). The enzyme catalyses L-aspartyl-tRNA(Asn) + L-glutamine + ATP + H2O = L-asparaginyl-tRNA(Asn) + L-glutamate + ADP + phosphate + 2 H(+). In terms of biological role, allows the formation of correctly charged Asn-tRNA(Asn) or Gln-tRNA(Gln) through the transamidation of misacylated Asp-tRNA(Asn) or Glu-tRNA(Gln) in organisms which lack either or both of asparaginyl-tRNA or glutaminyl-tRNA synthetases. The reaction takes place in the presence of glutamine and ATP through an activated phospho-Asp-tRNA(Asn) or phospho-Glu-tRNA(Gln). This chain is Aspartyl/glutamyl-tRNA(Asn/Gln) amidotransferase subunit C, found in Anaeromyxobacter sp. (strain Fw109-5).